The primary structure comprises 1068 residues: Phosphatidylinositol 4,5-bisphosphate 3-kinase catalytic subunit alpha isoform (1068 aa).

The PI3K-ABD domain occupies 16–105 (MPPRILVECL…QPFLKVIEPV (90 aa)). The PI3K-RBD domain occupies 187–289 (KGQIIVVIWV…GRMPNLMLMA (103 aa)). In terms of domain architecture, C2 PI3K-type spans 330–487 (INSALRIKIL…DWFSSVVKFP (158 aa)). In terms of domain architecture, PIK helical spans 517–694 (LARDNELREN…GLLLESYCRA (178 aa)). One can recognise a PI3K/PI4K catalytic domain in the interval 765–1051 (RLEECRIMSS…QMNDAHHGGW (287 aa)). The segment at 771–777 (IMSSAKR) is G-loop. A catalytic loop region spans residues 912–920 (GIGDRHNSN). Residues 931–957 (HIDFGHFLDHKKKKFGYKRERVPFVLT) form an activation loop region.

It belongs to the PI3/PI4-kinase family. As to quaternary structure, heterodimer of a catalytic subunit PIK3CA and a p85 regulatory subunit (PIK3R1, PIK3R2 or PIK3R3). Interacts with IRS1 in nuclear extracts. Interacts with RUFY3. Interacts with RASD2. Interacts with APPL1. Interacts with HRAS and KRAS. Interaction with HRAS/KRAS is required for PI3K pathway signaling and cell proliferation stimulated by EGF and FGF2. Interacts with FAM83B; activates the PI3K/AKT signaling cascade.

The catalysed reaction is a 1,2-diacyl-sn-glycero-3-phospho-(1D-myo-inositol-4,5-bisphosphate) + ATP = a 1,2-diacyl-sn-glycero-3-phospho-(1D-myo-inositol-3,4,5-trisphosphate) + ADP + H(+). It catalyses the reaction a 1,2-diacyl-sn-glycero-3-phospho-(1D-myo-inositol) + ATP = a 1,2-diacyl-sn-glycero-3-phospho-(1D-myo-inositol-3-phosphate) + ADP + H(+). The enzyme catalyses L-seryl-[protein] + ATP = O-phospho-L-seryl-[protein] + ADP + H(+). It carries out the reaction 1,2-dioctanoyl-sn-glycero-3-phospho-(1D-myo-inositol-4,5-bisphosphate) + ATP = 1,2-dioctanoyl-sn-glycero-3-phospho-(1D-myo-inositol-3,4,5-trisphosphate) + ADP + H(+). The catalysed reaction is 1-octadecanoyl-2-(5Z,8Z,11Z,14Z)-eicosatetraenoyl-sn-glycero-3-phospho-1D-myo-inositol 4,5-bisphosphate + ATP = 1-octadecanoyl-2-(5Z,8Z,11Z,14Z-eicosatetraenoyl)-sn-glycero-3-phospho-(1D-myo-inositol 3,4,5-triphosphate) + ADP + H(+). Its pathway is phospholipid metabolism; phosphatidylinositol phosphate biosynthesis. In terms of biological role, phosphoinositide-3-kinase (PI3K) phosphorylates phosphatidylinositol (PI) and its phosphorylated derivatives at position 3 of the inositol ring to produce 3-phosphoinositides. Uses ATP and PtdIns(4,5)P2 (phosphatidylinositol 4,5-bisphosphate) to generate phosphatidylinositol 3,4,5-trisphosphate (PIP3). PIP3 plays a key role by recruiting PH domain-containing proteins to the membrane, including AKT1 and PDPK1, activating signaling cascades involved in cell growth, survival, proliferation, motility and morphology. Participates in cellular signaling in response to various growth factors. Involved in the activation of AKT1 upon stimulation by receptor tyrosine kinases ligands such as EGF, insulin, IGF1, VEGFA and PDGF. Involved in signaling via insulin-receptor substrate (IRS) proteins. Essential in endothelial cell migration during vascular development through VEGFA signaling, possibly by regulating RhoA activity. Required for lymphatic vasculature development, possibly by binding to RAS and by activation by EGF and FGF2, but not by PDGF. Regulates invadopodia formation through the PDPK1-AKT1 pathway. Participates in cardiomyogenesis in embryonic stem cells through a AKT1 pathway. Participates in vasculogenesis in embryonic stem cells through PDK1 and protein kinase C pathway. In addition to its lipid kinase activity, it displays a serine-protein kinase activity that results in the autophosphorylation of the p85alpha regulatory subunit as well as phosphorylation of other proteins such as 4EBP1, H-Ras, the IL-3 beta c receptor and possibly others. Plays a role in the positive regulation of phagocytosis and pinocytosis. This chain is Phosphatidylinositol 4,5-bisphosphate 3-kinase catalytic subunit alpha isoform (PIK3CA), found in Homo sapiens (Human).